A 311-amino-acid chain; its full sequence is Sulfate adenylyltransferase subunit 2 (311 aa).

This sequence belongs to the PAPS reductase family. CysD subfamily. As to quaternary structure, heterodimer composed of CysD, the smaller subunit, and CysN.

The catalysed reaction is sulfate + ATP + H(+) = adenosine 5'-phosphosulfate + diphosphate. It functions in the pathway sulfur metabolism; hydrogen sulfide biosynthesis; sulfite from sulfate: step 1/3. With CysN forms the ATP sulfurylase (ATPS) that catalyzes the adenylation of sulfate producing adenosine 5'-phosphosulfate (APS) and diphosphate, the first enzymatic step in sulfur assimilation pathway. APS synthesis involves the formation of a high-energy phosphoric-sulfuric acid anhydride bond driven by GTP hydrolysis by CysN coupled to ATP hydrolysis by CysD. This chain is Sulfate adenylyltransferase subunit 2, found in Methylobacterium sp. (strain 4-46).